A 308-amino-acid polypeptide reads, in one-letter code: Phosphoribosylaminoimidazole-succinocarboxamide synthase (308 aa).

It belongs to the SAICAR synthetase family.

The catalysed reaction is 5-amino-1-(5-phospho-D-ribosyl)imidazole-4-carboxylate + L-aspartate + ATP = (2S)-2-[5-amino-1-(5-phospho-beta-D-ribosyl)imidazole-4-carboxamido]succinate + ADP + phosphate + 2 H(+). It participates in purine metabolism; IMP biosynthesis via de novo pathway; 5-amino-1-(5-phospho-D-ribosyl)imidazole-4-carboxamide from 5-amino-1-(5-phospho-D-ribosyl)imidazole-4-carboxylate: step 1/2. In Xylella fastidiosa (strain Temecula1 / ATCC 700964), this protein is Phosphoribosylaminoimidazole-succinocarboxamide synthase.